Reading from the N-terminus, the 185-residue chain is Large ribosomal subunit protein uL5 (185 aa).

The protein belongs to the universal ribosomal protein uL5 family. In terms of assembly, part of the 50S ribosomal subunit; part of the 5S rRNA/L5/L18/L25 subcomplex. Contacts the 5S rRNA and the P site tRNA. Forms a bridge to the 30S subunit in the 70S ribosome.

In terms of biological role, this is one of the proteins that bind and probably mediate the attachment of the 5S RNA into the large ribosomal subunit, where it forms part of the central protuberance. In the 70S ribosome it contacts protein S13 of the 30S subunit (bridge B1b), connecting the 2 subunits; this bridge is implicated in subunit movement. Contacts the P site tRNA; the 5S rRNA and some of its associated proteins might help stabilize positioning of ribosome-bound tRNAs. The polypeptide is Large ribosomal subunit protein uL5 (Bartonella henselae (strain ATCC 49882 / DSM 28221 / CCUG 30454 / Houston 1) (Rochalimaea henselae)).